A 248-amino-acid chain; its full sequence is Uracil-DNA glycosylase (248 aa).

D85 (proton acceptor) is an active-site residue.

The protein belongs to the uracil-DNA glycosylase (UDG) superfamily. UNG family.

The protein resides in the cytoplasm. It catalyses the reaction Hydrolyzes single-stranded DNA or mismatched double-stranded DNA and polynucleotides, releasing free uracil.. Excises uracil residues from the DNA which can arise as a result of misincorporation of dUMP residues by DNA polymerase or due to deamination of cytosine. The chain is Uracil-DNA glycosylase from Deinococcus deserti (strain DSM 17065 / CIP 109153 / LMG 22923 / VCD115).